A 1375-amino-acid polypeptide reads, in one-letter code: DNA-directed RNA polymerase subunit beta (1375 aa).

It belongs to the RNA polymerase beta chain family. As to quaternary structure, the RNAP catalytic core consists of 2 alpha, 1 beta, 1 beta' and 1 omega subunit. When a sigma factor is associated with the core the holoenzyme is formed, which can initiate transcription.

It carries out the reaction RNA(n) + a ribonucleoside 5'-triphosphate = RNA(n+1) + diphosphate. In terms of biological role, DNA-dependent RNA polymerase catalyzes the transcription of DNA into RNA using the four ribonucleoside triphosphates as substrates. The protein is DNA-directed RNA polymerase subunit beta of Campylobacter jejuni subsp. jejuni serotype O:6 (strain 81116 / NCTC 11828).